Consider the following 289-residue polypeptide: Glucosamine-6-phosphate deaminase 1 (289 aa).

Lysine 64 is subject to N6-acetyllysine. Residue aspartate 72 is the Proton acceptor; for enolization step of the active site. Aspartate 141 serves as the catalytic For ring-opening step. Histidine 143 acts as the Proton acceptor; for ring-opening step in catalysis. Glutamate 148 (for ring-opening step) is an active-site residue. Phosphothreonine is present on threonine 161.

It belongs to the glucosamine/galactosamine-6-phosphate isomerase family. In terms of assembly, homohexamer.

It is found in the cytoplasm. It catalyses the reaction alpha-D-glucosamine 6-phosphate + H2O = beta-D-fructose 6-phosphate + NH4(+). It participates in nucleotide-sugar biosynthesis; UDP-N-acetyl-alpha-D-glucosamine biosynthesis; alpha-D-glucosamine 6-phosphate from D-fructose 6-phosphate: step 1/1. Its activity is regulated as follows. Allosterically activated by N-acetylglucosamine-6-phosphate (GlcNAc6P). In terms of biological role, catalyzes the reversible conversion of alpha-D-glucosamine 6-phosphate (GlcN-6P) into beta-D-fructose 6-phosphate (Fru-6P) and ammonium ion, a regulatory reaction step in de novo uridine diphosphate-N-acetyl-alpha-D-glucosamine (UDP-GlcNAc) biosynthesis via hexosamine pathway. Deamination is coupled to aldo-keto isomerization mediating the metabolic flux from UDP-GlcNAc toward Fru-6P. At high ammonium level can drive amination and isomerization of Fru-6P toward hexosamines and UDP-GlcNAc synthesis. Has a role in fine tuning the metabolic fluctuations of cytosolic UDP-GlcNAc and their effects on hyaluronan synthesis that occur during tissue remodeling. Seems to trigger calcium oscillations in mammalian eggs. These oscillations serve as the essential trigger for egg activation and early development of the embryo. This Bos taurus (Bovine) protein is Glucosamine-6-phosphate deaminase 1.